We begin with the raw amino-acid sequence, 619 residues long: Very-long-chain aldehyde decarbonylase GL1-4 (619 aa).

5 helical membrane-spanning segments follow: residues 45–65, 94–114, 126–146, 178–198, and 325–345; these read IAFSLILPSLLLRMIHNQIWI, GWDDQILFNGLVFYAGYLAMP, GAVVTALVHTGPVEFLYYWFH, FAEHVVYFILFAIPILSTIYL, and AWYMWTLWPLAWLSMVLAWIY. The 135-residue stretch at 138-272 folds into the Fatty acid hydroxylase domain; sequence VEFLYYWFHR…MPFYDYIYNT (135 aa).

Belongs to the sterol desaturase family. As to quaternary structure, homodimer. As to expression, expressed ubiquitously at low levels, with higher accumulation in developing panicles, shoots and flag leaves.

The protein localises to the endoplasmic reticulum membrane. The enzyme catalyses a long-chain fatty aldehyde + 2 NADPH + O2 + H(+) = a long-chain alkane + formate + 2 NADP(+) + H2O. Its function is as follows. Aldehyde decarbonylase involved in the conversion of aldehydes to alkanes. Core component of a very-long-chain alkane synthesis complex. This is Very-long-chain aldehyde decarbonylase GL1-4 from Oryza sativa subsp. japonica (Rice).